The following is a 432-amino-acid chain: Glutamate-1-semialdehyde 2,1-aminomutase 2 (432 aa).

Lysine 268 is subject to N6-(pyridoxal phosphate)lysine.

The protein belongs to the class-III pyridoxal-phosphate-dependent aminotransferase family. HemL subfamily. Homodimer. Pyridoxal 5'-phosphate is required as a cofactor.

Its subcellular location is the cytoplasm. The enzyme catalyses (S)-4-amino-5-oxopentanoate = 5-aminolevulinate. The protein operates within porphyrin-containing compound metabolism; protoporphyrin-IX biosynthesis; 5-aminolevulinate from L-glutamyl-tRNA(Glu): step 2/2. This is Glutamate-1-semialdehyde 2,1-aminomutase 2 from Listeria innocua serovar 6a (strain ATCC BAA-680 / CLIP 11262).